A 278-amino-acid polypeptide reads, in one-letter code: 2-dehydro-3-deoxyphosphooctonate aldolase (278 aa).

Belongs to the KdsA family.

Its subcellular location is the cytoplasm. The catalysed reaction is D-arabinose 5-phosphate + phosphoenolpyruvate + H2O = 3-deoxy-alpha-D-manno-2-octulosonate-8-phosphate + phosphate. It participates in carbohydrate biosynthesis; 3-deoxy-D-manno-octulosonate biosynthesis; 3-deoxy-D-manno-octulosonate from D-ribulose 5-phosphate: step 2/3. It functions in the pathway bacterial outer membrane biogenesis; lipopolysaccharide biosynthesis. The sequence is that of 2-dehydro-3-deoxyphosphooctonate aldolase from Bartonella tribocorum (strain CIP 105476 / IBS 506).